Here is a 541-residue protein sequence, read N- to C-terminus: Beta-hexosaminidase subunit A2 (541 aa).

The N-terminal stretch at Met-1–Ser-21 is a signal peptide. The Proton donor role is filled by Glu-314. N-linked (GlcNAc...) asparagine glycans are attached at residues Asn-322, Asn-336, Asn-356, Asn-435, and Asn-483.

Belongs to the glycosyl hydrolase 20 family.

It is found in the lysosome. It catalyses the reaction Hydrolysis of terminal non-reducing N-acetyl-D-hexosamine residues in N-acetyl-beta-D-hexosaminides.. Responsible for the degradation of GM2 gangliosides, and a variety of other molecules containing terminal N-acetyl hexosamines. This chain is Beta-hexosaminidase subunit A2 (hexa2), found in Dictyostelium discoideum (Social amoeba).